Here is a 286-residue protein sequence, read N- to C-terminus: 4-hydroxybenzoate octaprenyltransferase (286 aa).

8 consecutive transmembrane segments (helical) span residues 20 to 40, 43 to 63, 96 to 116, 142 to 162, 167 to 187, 210 to 230, 235 to 255, and 266 to 286; these read IGTL…AQGL, IKVL…GCII, LFTL…PLVV, FLGI…LGEV, WWLF…YAIV, QIIG…GLVA, IYGL…RLIF, and FLNN…DYMI.

Belongs to the UbiA prenyltransferase family. The cofactor is Mg(2+).

Its subcellular location is the cell inner membrane. It carries out the reaction all-trans-octaprenyl diphosphate + 4-hydroxybenzoate = 4-hydroxy-3-(all-trans-octaprenyl)benzoate + diphosphate. Its pathway is cofactor biosynthesis; ubiquinone biosynthesis. Catalyzes the prenylation of para-hydroxybenzoate (PHB) with an all-trans polyprenyl group. Mediates the second step in the final reaction sequence of ubiquinone-8 (UQ-8) biosynthesis, which is the condensation of the polyisoprenoid side chain with PHB, generating the first membrane-bound Q intermediate 3-octaprenyl-4-hydroxybenzoate. The polypeptide is 4-hydroxybenzoate octaprenyltransferase (Shewanella frigidimarina (strain NCIMB 400)).